The chain runs to 667 residues: Beta-galactosidase LacA (667 aa).

A substrate-binding site is contributed by R109. Zn(2+) is bound at residue C113. N147 contacts substrate. Catalysis depends on E148, which acts as the Proton donor. Zn(2+) is bound by residues C153, C155, and C158. E307 serves as the catalytic Nucleophile. Residues W315 and 355 to 358 (EKFH) contribute to the substrate site.

This sequence belongs to the glycosyl hydrolase 42 family.

The enzyme catalyses Hydrolysis of terminal non-reducing beta-D-galactose residues in beta-D-galactosides.. Its function is as follows. Hydrolyzes lactose, oNP-galactoside (oNPG), pNP-galactosidase (pNPG), pNP-mannoside, pNP-glucoside, pNP-fucoside, pNP-N-acetylglucosamide, but not pNP-arabinoside or 4-methylumbelliferyl-beta-galactopyranoside (MUG). Transgalactosylates lactose at 10 g/L, but not at 270 g/L. This Lactobacillus acidophilus protein is Beta-galactosidase LacA.